A 1726-amino-acid chain; its full sequence is Protein Shroom2 (1726 aa).

The region spanning 79-159 (AGGCYSYWRG…ILKMIVKRRN (81 aa)) is the PDZ domain. Disordered regions lie at residues 294 to 373 (DNTK…RSDS), 425 to 451 (RTVA…LSPY), 657 to 676 (FSQL…DYSW), and 697 to 785 (EGRN…STYR). The segment covering 318-328 (VLQSTSINETS) has biased composition (polar residues). Over residues 329–338 (KIQRTEDNTE) the composition is skewed to basic and acidic residues. Residues 657 to 667 (FSQLDHSEKGS) show a composition bias toward basic and acidic residues. 2 stretches are compositionally biased toward polar residues: residues 746–755 (SKSTAALTES) and 769–785 (LESM…STYR). The region spanning 788–877 (LQEAQARVLR…SEPEKINEVG (90 aa)) is the ASD1 domain. Disordered stretches follow at residues 913-968 (PKVP…DKVT), 1007-1080 (LDAD…QCGA), 1092-1120 (KWKP…GTLP), 1166-1240 (FKKR…KNPS), 1269-1299 (SSKS…DKPP), and 1471-1499 (AQQR…VPSA). Low complexity predominate over residues 917–926 (PKVVSSSQSE). Positions 936–948 (DYAKSSEGQESKR) are enriched in basic and acidic residues. 2 stretches are compositionally biased toward polar residues: residues 1054-1070 (NSNS…SPTR) and 1104-1119 (ETSN…SGTL). Low complexity predominate over residues 1191-1205 (SSSSLATSSESLLTA). Polar residues predominate over residues 1209-1235 (RAQSYSPSSQDTFPPQSLQKQSPSTYP). The region spanning 1427–1721 (EELVREIVDK…QLKCLTDSLP (295 aa)) is the ASD2 domain.

Belongs to the shroom family. In terms of assembly, interacts with F-actin.

It is found in the apical cell membrane. The protein resides in the cell junction. Its subcellular location is the tight junction. It localises to the cytoplasm. The protein localises to the cytoskeleton. Functionally, may be involved in endothelial cell morphology changes during cell spreading. Required for eye pigmentation. In the retinal pigment epithelium, regulates the biogenesis of melanosomes and promotes their association with the apical cell surface by inducing gamma-tubulin redistribution. This is Protein Shroom2 (shroom2) from Xenopus tropicalis (Western clawed frog).